Consider the following 675-residue polypeptide: Methionine--tRNA ligase (675 aa).

The 'HIGH' region motif lies at 15–25 (PYANGSIHLGH). 4 residues coordinate Zn(2+): cysteine 146, cysteine 149, cysteine 159, and cysteine 162. A 'KMSKS' region motif is present at residues 332-336 (KMSKS). Lysine 335 is an ATP binding site. A tRNA-binding domain is found at 573–675 (DFAKIDMRIA…SGAKPGHQVK (103 aa)).

The protein belongs to the class-I aminoacyl-tRNA synthetase family. MetG type 1 subfamily. As to quaternary structure, homodimer. Zn(2+) serves as cofactor.

Its subcellular location is the cytoplasm. It catalyses the reaction tRNA(Met) + L-methionine + ATP = L-methionyl-tRNA(Met) + AMP + diphosphate. Its function is as follows. Is required not only for elongation of protein synthesis but also for the initiation of all mRNA translation through initiator tRNA(fMet) aminoacylation. The protein is Methionine--tRNA ligase of Proteus mirabilis (strain HI4320).